Reading from the N-terminus, the 243-residue chain is Probable transcriptional regulatory protein BG0025 (243 aa).

Belongs to the TACO1 family.

It localises to the cytoplasm. This is Probable transcriptional regulatory protein BG0025 from Borrelia garinii subsp. bavariensis (strain ATCC BAA-2496 / DSM 23469 / PBi) (Borreliella bavariensis).